Here is a 259-residue protein sequence, read N- to C-terminus: E3 ubiquitin-protein ligase RNF170 (259 aa).

Over 1 to 25 (MAKYQGEVQSLKLDDDSVIEGVSDQ) the chain is Lumenal. Residues 26–46 (VLVAVVVSLALIATLVYALFS) traverse the membrane as a helical segment. Residues 47-202 (RNAHQNIHPE…GGLFWMFRIR (156 aa)) are Cytoplasmic-facing. An RING-type zinc finger spans residues 88–131 (CPICLHQASLPVETNCGHLFCGTCIVAYWRYGSWLGAISCPICR). A helical transmembrane segment spans residues 203–223 (IILCLMGAFFYLISPLDFVPE). A topological domain (lumenal) is located at residue A224. The helical transmembrane segment at 225–245 (LFGILGFLDDFFVIFLLLIYI) threads the bilayer. Residues 246–259 (SIMYREVITQRLNR) are Cytoplasmic-facing.

In terms of assembly, constitutively associated with the ERLIN1/ERLIN 2 complex. Interacts with activated ITPR1.

The protein localises to the endoplasmic reticulum membrane. The catalysed reaction is S-ubiquitinyl-[E2 ubiquitin-conjugating enzyme]-L-cysteine + [acceptor protein]-L-lysine = [E2 ubiquitin-conjugating enzyme]-L-cysteine + N(6)-ubiquitinyl-[acceptor protein]-L-lysine.. The protein operates within protein modification; protein ubiquitination. Its function is as follows. E3 ubiquitin-protein ligase. Plays an essential role in stimulus-induced inositol 1,4,5-trisphosphate receptor type 1 (ITPR1) ubiquitination and degradation via the endoplasmic reticulum-associated degradation (ERAD) pathway. Also involved in ITPR1 turnover in resting cells. Selectively inhibits the TLR3-triggered innate immune response by promoting the 'Lys-48'-linked polyubiquitination and degradation of TLR3. The polypeptide is E3 ubiquitin-protein ligase RNF170 (RNF170) (Bos taurus (Bovine)).